A 131-amino-acid chain; its full sequence is Small ribosomal subunit protein bS6 (131 aa).

Positions 98-131 are disordered; that stretch reads EASPMVKAKDERRERREDFANETADDSEAGDSEE. Positions 104-116 are enriched in basic and acidic residues; it reads KAKDERRERREDF. Residues 120 to 131 are compositionally biased toward acidic residues; the sequence is TADDSEAGDSEE.

This sequence belongs to the bacterial ribosomal protein bS6 family.

In terms of biological role, binds together with bS18 to 16S ribosomal RNA. The polypeptide is Small ribosomal subunit protein bS6 (Klebsiella pneumoniae subsp. pneumoniae (strain ATCC 700721 / MGH 78578)).